We begin with the raw amino-acid sequence, 263 residues long: 2-dehydro-3-deoxyphosphooctonate aldolase (263 aa).

The protein belongs to the KdsA family.

The protein resides in the cytoplasm. It catalyses the reaction D-arabinose 5-phosphate + phosphoenolpyruvate + H2O = 3-deoxy-alpha-D-manno-2-octulosonate-8-phosphate + phosphate. It functions in the pathway carbohydrate biosynthesis; 3-deoxy-D-manno-octulosonate biosynthesis; 3-deoxy-D-manno-octulosonate from D-ribulose 5-phosphate: step 2/3. The protein operates within bacterial outer membrane biogenesis; lipopolysaccharide biosynthesis. The sequence is that of 2-dehydro-3-deoxyphosphooctonate aldolase from Wolinella succinogenes (strain ATCC 29543 / DSM 1740 / CCUG 13145 / JCM 31913 / LMG 7466 / NCTC 11488 / FDC 602W) (Vibrio succinogenes).